The sequence spans 7192 residues: Nonribosomal peptide synthetase gloA (7192 aa).

A compositionally biased stretch (polar residues) spans 1-48; sequence MTPSRSLENGEKQMNWNESPQTASPKNVLRDSNSNGNYVNGHGTNING. The tract at residues 1–52 is disordered; sequence MTPSRSLENGEKQMNWNESPQTASPKNVLRDSNSNGNYVNGHGTNINGDGSD. Positions 105 to 181 constitute a Carrier 1 domain; sequence HSTSKFKEEF…GLFATANFRP (77 aa). Position 142 is an O-(pantetheine 4'-phosphoryl)serine (Ser-142). The segment at 239 to 634 is condensation 1; that stretch reads EDVYPCTPLQ…TYTVQCLCNP (396 aa). Residues 675-1047 are adenylation 1; the sequence is QDQVNIQPAK…SLMYLGRCDS (373 aa). Residues 1190-1266 form the Carrier 2 domain; the sequence is APSTDAEKQV…DLAFVIQRRL (77 aa). Ser-1227 carries the O-(pantetheine 4'-phosphoryl)serine modification. The segment at 1316–1736 is condensation 2; sequence EDIYPCTPLQ…MSWLSDYDEE (421 aa). Positions 1758-2154 are adenylation 2; it reads QEQTKLRPNA…GRRDTQIKIR (397 aa). A Carrier 3 domain is found at 2288 to 2364; that stretch reads APSTREECLV…ELAELLAKRS (77 aa). Ser-2325 is subject to O-(pantetheine 4'-phosphoryl)serine. Positions 2407–2829 are condensation 3; that stretch reads VEDVYPCTPL…LIAPEDQEQI (423 aa). The segment at 2849–3245 is adenylation 3; the sequence is YKQVMARPQA…GRRDDQIKIR (397 aa). Residues 3378–3455 form the Carrier 4 domain; the sequence is TPSTKMEKVI…DLASVMTEHR (78 aa). At Ser-3415 the chain carries O-(pantetheine 4'-phosphoryl)serine. The condensation 4 stretch occupies residues 3502–3891; sequence EDIYPCTALQ…NGVLDQFVYI (390 aa). Positions 3920–4320 are adenylation 4; the sequence is QEQALARPTA…ARRDMQVKIR (401 aa). The region spanning 4453 to 4529 is the Carrier 5 domain; sequence LPSTQVELQL…ELAVILDGRK (77 aa). Position 4490 is an O-(pantetheine 4'-phosphoryl)serine (Ser-4490). Residues 4574-4971 are condensation 5; sequence EDIYPCTPLQ…QFEYVVQKFH (398 aa). Positions 5013–5414 are adenylation 5; that stretch reads DDHVAARPMA…GRQDLQVKIR (402 aa). One can recognise a Carrier 6 domain in the interval 5551–5627; it reads APDTDLGRLI…DLVNTLSNRS (77 aa). O-(pantetheine 4'-phosphoryl)serine is present on Ser-5588. Residues 5674-6071 form a condensation 6 region; the sequence is EDVYPSTPLQ…CVVQRILTQS (398 aa). Positions 6111-6507 are adenylation 6; it reads QAQVKKSPAA…GRRDLQVKIR (397 aa). The Carrier 7 domain maps to 6645–6721; the sequence is NPSTTMERQL…DLAVVLTDRL (77 aa). Position 6682 is an O-(pantetheine 4'-phosphoryl)serine (Ser-6682). Positions 6795-7178 are condensation 7; the sequence is NGPCDTRALK…NPLSPVKQVL (384 aa).

The protein belongs to the NRP synthetase family.

It functions in the pathway mycotoxin biosynthesis. Its function is as follows. Nonribosomal peptide synthetase; part of the gene cluster that mediates the biosynthesis of pneumocandins, lipohexapeptides of the echinocandin family that prevent fungal cell wall formation by non-competitive inhibition of beta-1,3-glucan synthase. The 10,12-dimethylmyristoyl side chain is synthesized by the reducing polyketide synthase gloL/GLPKS4. The thioesterase gloN/GLHYD exclusively interacts with gloL/GLPKS4 to maintain turnover of the polyketide side chain. The 10R,12S-dimethylmyristic acid is then transferred to the first thiolation domain of the nonribosomal peptide synthetase gloA/GLNRPS4 by the acyl-AMP ligase gloD/GLligase, followed by its acylation to L-ornithine to trigger elongation of the cyclic hexapeptide. L-ornithine, 4R-hydroxyl-L-proline (generated from L-proline by the dioxygenase gloF/GLOXY2), 3S-hydroxyl-L-homotyrosine (generated by gloG/GLHtyB, gloH/GLHtyA, gloI/GLHtyC, gloJ/GLHtyD and hydroxylated at C-3 by the dioxygenase gloM/GLOXY1), 3R-hydroxyl-L-glutamine (generated from L-glutamine probably by the dioxygenase gloE/GLOXY3) and 3S-hydroxyl-L-proline (generated from L-proline by the dioxygenase gloF/GLOXY2 to yield pneumocandin B0), or 3S-hydroxyl-4S-methyl-L-proline (generated from L-leucine by the dioxygenase gloC/GLOXY4 to yield pneumocandin A0) are sequentially added to the growing chain. The last C domain of gloA/GLNRPS4 is proposed to be responsible for cyclization by condensation to form the peptide bond between L-ornithine and 3S-hydroxyl-4S-methyl-L-proline (for pneumocandin A0) or 3S-hydroxyl-L-proline (for pneumocandin B0). Finally, the subsequent C-4 hydroxylation of 3S-hydroxyl-L-homotyrosine and L-ornithine dihydroxylation at C-4 and C-5 are performed by the cytochrome P450 monooxygenases gloP/GLP450-1 and gloO/GLP450-2, respectively. The protein is Nonribosomal peptide synthetase gloA of Glarea lozoyensis (strain ATCC 20868 / MF5171).